We begin with the raw amino-acid sequence, 111 residues long: Translation initiation factor 1A (111 aa).

Positions 1-13 (MKKSNNKNNHKNN) are enriched in basic residues. The disordered stretch occupies residues 1–30 (MKKSNNKNNHKNNHNNNQGGENIRVRSPRR). The S1-like domain maps to 23-96 (IRVRSPRRGE…EKADVIWRYT (74 aa)).

The protein belongs to the eIF-1A family.

In terms of biological role, seems to be required for maximal rate of protein biosynthesis. Enhances ribosome dissociation into subunits and stabilizes the binding of the initiator Met-tRNA(I) to 40 S ribosomal subunits. This Methanosphaera stadtmanae (strain ATCC 43021 / DSM 3091 / JCM 11832 / MCB-3) protein is Translation initiation factor 1A.